Consider the following 113-residue polypeptide: Large ribosomal subunit protein uL22 (113 aa).

Belongs to the universal ribosomal protein uL22 family. Part of the 50S ribosomal subunit.

In terms of biological role, this protein binds specifically to 23S rRNA; its binding is stimulated by other ribosomal proteins, e.g. L4, L17, and L20. It is important during the early stages of 50S assembly. It makes multiple contacts with different domains of the 23S rRNA in the assembled 50S subunit and ribosome. The globular domain of the protein is located near the polypeptide exit tunnel on the outside of the subunit, while an extended beta-hairpin is found that lines the wall of the exit tunnel in the center of the 70S ribosome. This is Large ribosomal subunit protein uL22 from Desulforudis audaxviator (strain MP104C).